The primary structure comprises 271 residues: Ribosomal RNA small subunit methyltransferase A (271 aa).

His-11, Leu-13, Gly-38, Glu-58, Asp-86, and Asn-101 together coordinate S-adenosyl-L-methionine.

The protein belongs to the class I-like SAM-binding methyltransferase superfamily. rRNA adenine N(6)-methyltransferase family. RsmA subfamily.

It localises to the cytoplasm. It catalyses the reaction adenosine(1518)/adenosine(1519) in 16S rRNA + 4 S-adenosyl-L-methionine = N(6)-dimethyladenosine(1518)/N(6)-dimethyladenosine(1519) in 16S rRNA + 4 S-adenosyl-L-homocysteine + 4 H(+). In terms of biological role, specifically dimethylates two adjacent adenosines (A1518 and A1519) in the loop of a conserved hairpin near the 3'-end of 16S rRNA in the 30S particle. May play a critical role in biogenesis of 30S subunits. This is Ribosomal RNA small subunit methyltransferase A from Helicobacter pylori (strain HPAG1).